We begin with the raw amino-acid sequence, 106 residues long: Nucleoid-associated protein Fjoh_2555 (106 aa).

The protein belongs to the YbaB/EbfC family. In terms of assembly, homodimer.

It localises to the cytoplasm. Its subcellular location is the nucleoid. Binds to DNA and alters its conformation. May be involved in regulation of gene expression, nucleoid organization and DNA protection. This chain is Nucleoid-associated protein Fjoh_2555, found in Flavobacterium johnsoniae (strain ATCC 17061 / DSM 2064 / JCM 8514 / BCRC 14874 / CCUG 350202 / NBRC 14942 / NCIMB 11054 / UW101) (Cytophaga johnsonae).